A 163-amino-acid polypeptide reads, in one-letter code: Protein GOLVEN 3 (163 aa).

The signal sequence occupies residues 1-20 (MMRFTIIVIAFLLIIQSLEE). Positions 21–141 (EHILVYAHEG…MEKLARLLRD (121 aa)) are excised as a propeptide. Tyr-143 bears the Sulfotyrosine mark. Residues 144 to 163 (PIYSKPRRKPPVNNRAPDKF) form a disordered region. Pro-154 carries the hydroxyproline modification. Positions 158-163 (RAPDKF) are excised as a propeptide.

Belongs to the RGF family. In terms of assembly, binds to LRR receptor-like serine/threonine-protein kinases RGI1, RGI2 and RGI3 to trigger their dimerization with SERK proteins and subsequent signaling. Expressed in roots, specifically in the root apical meristem (RAM).

The protein localises to the secreted. In terms of biological role, signaling peptide (root growth factor) required during root gravitropism in a PIN2-traffic dependent manner, thus influencing the formation of auxin gradients. Maintains the postembryonic root stem cell niche. The polypeptide is Protein GOLVEN 3 (Arabidopsis thaliana (Mouse-ear cress)).